Consider the following 460-residue polypeptide: Ammonium transporter 1 member 3 (460 aa).

10 helical membrane passes run Ala-15 to Ala-37, Leu-50 to Phe-72, Phe-98 to Ile-117, Thr-124 to Trp-146, Ile-166 to Val-188, Asn-209 to Phe-227, Ala-255 to Val-277, Pro-305 to Leu-327, Ala-337 to Ala-356, and Gly-377 to Val-399.

It belongs to the ammonia transporter channel (TC 1.A.11.2) family. Leaves.

The protein resides in the membrane. Its function is as follows. Ammonium transporter that may be involved in ammonium transport throughout the plant. This is Ammonium transporter 1 member 3 (AMT1-3) from Solanum lycopersicum (Tomato).